The following is a 156-amino-acid chain: Protein SprT (156 aa).

A SprT-like domain is found at 15-153 (NRYFNKHFTP…CKKCKEILVL (139 aa)). His-67 serves as a coordination point for Zn(2+). The active site involves Glu-68. Zn(2+) is bound at residue His-71.

The protein belongs to the SprT family. Requires Zn(2+) as cofactor.

It localises to the cytoplasm. The chain is Protein SprT from Glaesserella parasuis serovar 5 (strain SH0165) (Haemophilus parasuis).